The primary structure comprises 393 residues: uncharacterized protein (393 aa).

8 helical membrane passes run 15-35, 56-76, 86-106, 131-151, 176-196, 253-273, 289-309, and 349-369; these read IVAF…VTIF, WGWI…NVII, FYAS…FQIV, AVLI…LITW, LSLT…VIAF, LLAN…VFMI, LIDL…IPVA, and VYLP…QVIW.

It is found in the cell membrane. This is an uncharacterized protein from Mycoplasma genitalium (strain ATCC 33530 / DSM 19775 / NCTC 10195 / G37) (Mycoplasmoides genitalium).